The chain runs to 84 residues: MAHKKAGGSTRNGRDSESKRLGVKRFGGESVLAGNIIVRQRGTKFHAGVNVGIGRDHTLFALTDGKVKFEVKGPKNRKFISIEA.

Positions 1–22 (MAHKKAGGSTRNGRDSESKRLG) are disordered.

This sequence belongs to the bacterial ribosomal protein bL27 family.

This Shewanella loihica (strain ATCC BAA-1088 / PV-4) protein is Large ribosomal subunit protein bL27.